We begin with the raw amino-acid sequence, 200 residues long: NADH-quinone oxidoreductase subunit C (200 aa).

The protein belongs to the complex I 30 kDa subunit family. In terms of assembly, NDH-1 is composed of 14 different subunits. Subunits NuoB, C, D, E, F, and G constitute the peripheral sector of the complex.

The protein resides in the cell inner membrane. It carries out the reaction a quinone + NADH + 5 H(+)(in) = a quinol + NAD(+) + 4 H(+)(out). Its function is as follows. NDH-1 shuttles electrons from NADH, via FMN and iron-sulfur (Fe-S) centers, to quinones in the respiratory chain. The immediate electron acceptor for the enzyme in this species is believed to be ubiquinone. Couples the redox reaction to proton translocation (for every two electrons transferred, four hydrogen ions are translocated across the cytoplasmic membrane), and thus conserves the redox energy in a proton gradient. The sequence is that of NADH-quinone oxidoreductase subunit C from Chelativorans sp. (strain BNC1).